Here is a 224-residue protein sequence, read N- to C-terminus: Urease accessory protein UreF (224 aa).

This sequence belongs to the UreF family. As to quaternary structure, ureD, UreF and UreG form a complex that acts as a GTP-hydrolysis-dependent molecular chaperone, activating the urease apoprotein by helping to assemble the nickel containing metallocenter of UreC. The UreE protein probably delivers the nickel.

The protein localises to the cytoplasm. In terms of biological role, required for maturation of urease via the functional incorporation of the urease nickel metallocenter. The sequence is that of Urease accessory protein UreF from Pseudomonas fluorescens (strain Pf0-1).